The chain runs to 502 residues: NAD(P)H-quinone oxidoreductase chain 4, chloroplastic (502 aa).

The next 14 membrane-spanning stretches (helical) occupy residues 4–24 (FPWLTILVVLPIFAGSLIFFL), 37–57 (ISICLLEFLLMTYAFCYHFQL), 87–107 (LGSILLTGFITTLATLAAWPV), 113–130 (LFYFLMLAMYSGQIGLFS), 134–154 (LLLFFIMWELELIPVYLLLSM), 167–187 (FILYTAGGSIFFLIGVLGMGL), 213–233 (ILLYFGFLIAYAVKLPIIPLH), 244–264 (HYSTCMLLAGILLKMGAYGLI), 274–294 (AHYLFSPWLVIIGAIQIIYAA), 315–335 (MGFIIIGIGSITNIGLNGAIL), 336–356 (QILSHGFIGATLFFLAGTASD), 388–408 (LALPGMSGFVAELVVFFGLIT), 419–439 (LITFVMAIGMILTPIYLLSML), and 464–484 (LFILICIFLPVIGIGIYPDFV).

The protein belongs to the complex I subunit 4 family.

The protein localises to the plastid. Its subcellular location is the chloroplast thylakoid membrane. It carries out the reaction a plastoquinone + NADH + (n+1) H(+)(in) = a plastoquinol + NAD(+) + n H(+)(out). The catalysed reaction is a plastoquinone + NADPH + (n+1) H(+)(in) = a plastoquinol + NADP(+) + n H(+)(out). This chain is NAD(P)H-quinone oxidoreductase chain 4, chloroplastic, found in Lolium perenne (Perennial ryegrass).